The chain runs to 80 residues: Exodeoxyribonuclease 7 small subunit (80 aa).

It belongs to the XseB family. In terms of assembly, heterooligomer composed of large and small subunits.

It is found in the cytoplasm. It carries out the reaction Exonucleolytic cleavage in either 5'- to 3'- or 3'- to 5'-direction to yield nucleoside 5'-phosphates.. Functionally, bidirectionally degrades single-stranded DNA into large acid-insoluble oligonucleotides, which are then degraded further into small acid-soluble oligonucleotides. The polypeptide is Exodeoxyribonuclease 7 small subunit (Salmonella paratyphi B (strain ATCC BAA-1250 / SPB7)).